Consider the following 157-residue polypeptide: Endoribonuclease YbeY (157 aa).

Histidine 122, histidine 126, and histidine 132 together coordinate Zn(2+).

The protein belongs to the endoribonuclease YbeY family. Zn(2+) serves as cofactor.

The protein resides in the cytoplasm. Single strand-specific metallo-endoribonuclease involved in late-stage 70S ribosome quality control and in maturation of the 3' terminus of the 16S rRNA. This Lysinibacillus sphaericus (strain C3-41) protein is Endoribonuclease YbeY.